The chain runs to 134 residues: Cytochrome b (134 aa).

3 consecutive transmembrane segments (helical) span residues 33–53 (FGSL…FLAM), 77–98 (WLLR…YLHV), and 113–133 (WNVG…GYVL). Heme b is bound by residues His-83 and His-97.

It belongs to the cytochrome b family. As to quaternary structure, the cytochrome bc1 complex contains 11 subunits: 3 respiratory subunits (MT-CYB, CYC1 and UQCRFS1), 2 core proteins (UQCRC1 and UQCRC2) and 6 low-molecular weight proteins (UQCRH/QCR6, UQCRB/QCR7, UQCRQ/QCR8, UQCR10/QCR9, UQCR11/QCR10 and a cleavage product of UQCRFS1). This cytochrome bc1 complex then forms a dimer. Heme b serves as cofactor.

Its subcellular location is the mitochondrion inner membrane. Component of the ubiquinol-cytochrome c reductase complex (complex III or cytochrome b-c1 complex) that is part of the mitochondrial respiratory chain. The b-c1 complex mediates electron transfer from ubiquinol to cytochrome c. Contributes to the generation of a proton gradient across the mitochondrial membrane that is then used for ATP synthesis. In Chiroderma trinitatum (Little big-eyed bat), this protein is Cytochrome b (MT-CYB).